The sequence spans 384 residues: Probable beta-1,3-galactosyltransferase 1 (384 aa).

Residues 21–43 (SVFFMCLASFCLGMFFTNRMWNI) form a helical; Signal-anchor for type II membrane protein membrane-spanning segment. Residues Asn-73 and Asn-105 are each glycosylated (N-linked (GlcNAc...) asparagine).

This sequence belongs to the glycosyltransferase 31 family. It depends on Mn(2+) as a cofactor.

The protein resides in the golgi apparatus membrane. The protein operates within protein modification; protein glycosylation. In terms of biological role, beta-1,3-galactosyltransferase that transfers galactose from UDP-galactose to substrates with a terminal glycosyl residue. This Arabidopsis thaliana (Mouse-ear cress) protein is Probable beta-1,3-galactosyltransferase 1 (B3GALT1).